We begin with the raw amino-acid sequence, 382 residues long: UDP-N-acetylglucosamine--N-acetylmuramyl-(pentapeptide) pyrophosphoryl-undecaprenol N-acetylglucosamine transferase (382 aa).

UDP-N-acetyl-alpha-D-glucosamine-binding positions include 11–13 (TGG), Asn-124, Arg-165, Ser-200, Ile-254, and Gln-299.

The protein belongs to the glycosyltransferase 28 family. MurG subfamily.

The protein localises to the cell inner membrane. It carries out the reaction di-trans,octa-cis-undecaprenyl diphospho-N-acetyl-alpha-D-muramoyl-L-alanyl-D-glutamyl-meso-2,6-diaminopimeloyl-D-alanyl-D-alanine + UDP-N-acetyl-alpha-D-glucosamine = di-trans,octa-cis-undecaprenyl diphospho-[N-acetyl-alpha-D-glucosaminyl-(1-&gt;4)]-N-acetyl-alpha-D-muramoyl-L-alanyl-D-glutamyl-meso-2,6-diaminopimeloyl-D-alanyl-D-alanine + UDP + H(+). It functions in the pathway cell wall biogenesis; peptidoglycan biosynthesis. Cell wall formation. Catalyzes the transfer of a GlcNAc subunit on undecaprenyl-pyrophosphoryl-MurNAc-pentapeptide (lipid intermediate I) to form undecaprenyl-pyrophosphoryl-MurNAc-(pentapeptide)GlcNAc (lipid intermediate II). The chain is UDP-N-acetylglucosamine--N-acetylmuramyl-(pentapeptide) pyrophosphoryl-undecaprenol N-acetylglucosamine transferase from Nitratidesulfovibrio vulgaris (strain DSM 19637 / Miyazaki F) (Desulfovibrio vulgaris).